Reading from the N-terminus, the 423-residue chain is Glutamate-1-semialdehyde 2,1-aminomutase (423 aa).

Lysine 263 carries the N6-(pyridoxal phosphate)lysine modification.

Belongs to the class-III pyridoxal-phosphate-dependent aminotransferase family. HemL subfamily. It depends on pyridoxal 5'-phosphate as a cofactor.

It is found in the cytoplasm. The catalysed reaction is (S)-4-amino-5-oxopentanoate = 5-aminolevulinate. It participates in porphyrin-containing compound metabolism; protoporphyrin-IX biosynthesis; 5-aminolevulinate from L-glutamyl-tRNA(Glu): step 2/2. This Ignicoccus hospitalis (strain KIN4/I / DSM 18386 / JCM 14125) protein is Glutamate-1-semialdehyde 2,1-aminomutase.